Consider the following 144-residue polypeptide: Austinoid biosynthesis cluster protein S (144 aa).

It belongs to the trt14 isomerase family. In terms of assembly, homodimer.

The protein operates within secondary metabolite biosynthesis; terpenoid biosynthesis. In terms of biological role, part of the gene cluster that mediates the biosynthesis of calidodehydroaustin, a fungal meroterpenoid. The first step of the pathway is the synthesis of 3,5-dimethylorsellinic acid by the polyketide synthase ausA. 3,5-dimethylorsellinic acid is then prenylated by the polyprenyl transferase ausN. Further epoxidation by the FAD-dependent monooxygenase ausM and cyclization by the probable terpene cyclase ausL lead to the formation of protoaustinoid A. Protoaustinoid A is then oxidized to spiro-lactone preaustinoid A3 by the combined action of the FAD-binding monooxygenases ausB and ausC, and the dioxygenase ausE. Acid-catalyzed keto-rearrangement and ring contraction of the tetraketide portion of preaustinoid A3 by ausJ lead to the formation of preaustinoid A4. The aldo-keto reductase ausK, with the help of ausH, is involved in the next step by transforming preaustinoid A4 into isoaustinone which is in turn hydroxylated by the P450 monooxygenase ausI to form austinolide. The cytochrome P450 monooxygenase ausG modifies austinolide to austinol. Austinol is further acetylated to austin by the O-acetyltransferase ausP, which spontaneously changes to dehydroaustin. The cytochrome P450 monooxygenase ausR then converts dehydroaustin is into 7-dehydrodehydroaustin. The hydroxylation catalyzed by ausR permits the O-acetyltransferase ausQ to add an additional acetyl group to the molecule, leading to the formation of acetoxydehydroaustin. The short chain dehydrogenase ausT catalyzes the reduction of the double bond present between carbon atoms 1 and 2 to convert 7-dehydrodehydroaustin into 1,2-dihydro-7-hydroxydehydroaustin. AusQ catalyzes not only an acetylation reaction but also the addition of the PKS ausV diketide product to 1,2-dihydro-7-hydroxydehydroaustin, forming precalidodehydroaustin. Finally, the iron/alpha-ketoglutarate-dependent dioxygenase converts precalidodehydroaustin into calidodehydroaustin. AusS is necessary for austinoids production and may play a possible function as a regulator. Functionally, may play a possible function as a regulator. This chain is Austinoid biosynthesis cluster protein S, found in Aspergillus calidoustus.